The following is a 76-amino-acid chain: Acyl carrier protein (76 aa).

The 76-residue stretch at 1–76 folds into the Carrier domain; it reads MATFDDVKDV…AAIDYIESKQ (76 aa). At Ser36 the chain carries O-(pantetheine 4'-phosphoryl)serine.

This sequence belongs to the acyl carrier protein (ACP) family. Post-translationally, 4'-phosphopantetheine is transferred from CoA to a specific serine of apo-ACP by AcpS. This modification is essential for activity because fatty acids are bound in thioester linkage to the sulfhydryl of the prosthetic group.

The protein resides in the cytoplasm. The protein operates within lipid metabolism; fatty acid biosynthesis. Its function is as follows. Carrier of the growing fatty acid chain in fatty acid biosynthesis. The sequence is that of Acyl carrier protein from Deinococcus deserti (strain DSM 17065 / CIP 109153 / LMG 22923 / VCD115).